Consider the following 643-residue polypeptide: Alpha-dioxygenase PIOX (643 aa).

The active-site Proton acceptor is the H168. D169 contacts Ca(2+). H173 contacts heme b. Ca(2+)-binding residues include T221, W223, D225, and S227. The heme b site is built by H393, R490, and R494.

Belongs to the peroxidase family. It depends on heme b as a cofactor. Requires Ca(2+) as cofactor.

It catalyses the reaction hexadecanoate + O2 = (2R)-2-hydroperoxyhexadecanoate. It carries out the reaction dodecanoate + O2 = (2R)-2-hydroperoxydodecanoate. In terms of biological role, alpha-dioxygenase that catalyzes the primary oxygenation step of a variety of 14-20 carbon fatty acids, containing up to three unsaturated bonds, into their corresponding 2R-hydroperoxides. Involved in the production of oxylipins that function in cell signaling, wound healing, and protection from infection. The alpha-oxidation pathway of fatty acids may play a role during plant developmental processes. In Pisum sativum (Garden pea), this protein is Alpha-dioxygenase PIOX.